The chain runs to 127 residues: Protein ApaG (127 aa).

The ApaG domain maps to 3–127; sequence DQPPTEIQIS…FRLAAATVFH (125 aa).

The sequence is that of Protein ApaG from Acidithiobacillus ferrooxidans (strain ATCC 23270 / DSM 14882 / CIP 104768 / NCIMB 8455) (Ferrobacillus ferrooxidans (strain ATCC 23270)).